Here is a 426-residue protein sequence, read N- to C-terminus: Serine--tRNA ligase (426 aa).

Residue 235–237 coordinates L-serine; that stretch reads TAE. 266 to 268 serves as a coordination point for ATP; the sequence is RRE. Glu289 provides a ligand contact to L-serine. 353–356 contacts ATP; the sequence is EISS. Position 389 (Ser389) interacts with L-serine.

Belongs to the class-II aminoacyl-tRNA synthetase family. Type-1 seryl-tRNA synthetase subfamily. Homodimer. The tRNA molecule binds across the dimer.

It localises to the cytoplasm. It catalyses the reaction tRNA(Ser) + L-serine + ATP = L-seryl-tRNA(Ser) + AMP + diphosphate + H(+). It carries out the reaction tRNA(Sec) + L-serine + ATP = L-seryl-tRNA(Sec) + AMP + diphosphate + H(+). Its pathway is aminoacyl-tRNA biosynthesis; selenocysteinyl-tRNA(Sec) biosynthesis; L-seryl-tRNA(Sec) from L-serine and tRNA(Sec): step 1/1. Catalyzes the attachment of serine to tRNA(Ser). Is also able to aminoacylate tRNA(Sec) with serine, to form the misacylated tRNA L-seryl-tRNA(Sec), which will be further converted into selenocysteinyl-tRNA(Sec). The polypeptide is Serine--tRNA ligase (Nostoc punctiforme (strain ATCC 29133 / PCC 73102)).